The sequence spans 173 residues: Alpha-crystallin A chain (173 aa).

M1 is subject to N-acetylmethionine. Residues 1 to 63 are required for complex formation with BFSP1 and BFSP2; that stretch reads MDVTIQHPWF…RTVLDSGISE (63 aa). Q6 carries the post-translational modification Deamidated glutamine; partial. Position 45 is a phosphoserine (S45). Residue Q50 is modified to Deamidated glutamine; partial. In terms of domain architecture, sHSP spans 52 to 162; the sequence is LFRTVLDSGI…SHSERAIPVS (111 aa). The residue at position 99 (K99) is an N6-acetyllysine. H100 lines the Zn(2+) pocket. N101 is modified (deamidated asparagine; partial). Positions 102 and 107 each coordinate Zn(2+). S122 is modified (phosphoserine). Position 123 is a deamidated asparagine; partial (N123). The cysteines at positions 131 and 142 are disulfide-linked. Deamidated glutamine; partial is present on Q147. The segment at 147-173 is disordered; sequence QSGMDASHSERAIPVSREEKPSSAPSS. Over residues 153-167 the composition is skewed to basic and acidic residues; sequence SHSERAIPVSREEKP. A Zn(2+)-binding site is contributed by H154. S162 is a glycosylation site (O-linked (GlcNAc) serine).

It belongs to the small heat shock protein (HSP20) family. In terms of assembly, heteromer composed of three CRYAA and one CRYAB subunits. Inter-subunit bridging via zinc ions enhances stability, which is crucial as there is no protein turn over in the lens. Can also form homodimers and homotetramers (dimers of dimers) which serve as the building blocks of homooligomers. Within homooligomers, the zinc-binding motif is created from residues of 3 different molecules. His-100 and Glu-102 from one molecule are ligands of the zinc ion, and His-107 and His-154 residues from additional molecules complete the site with tetrahedral coordination geometry. Part of a complex required for lens intermediate filament formation composed of BFSP1, BFSP2 and CRYAA. Undergoes age-dependent proteolytical cleavage at the C-terminus.

The protein resides in the cytoplasm. The protein localises to the nucleus. Contributes to the transparency and refractive index of the lens. In its oxidized form (absence of intramolecular disulfide bond), acts as a chaperone, preventing aggregation of various proteins under a wide range of stress conditions. Required for the correct formation of lens intermediate filaments as part of a complex composed of BFSP1, BFSP2 and CRYAA. This chain is Alpha-crystallin A chain (CRYAA), found in Procavia capensis (Rock hyrax).